A 294-amino-acid polypeptide reads, in one-letter code: 33 kDa chaperonin (294 aa).

2 disulfide bridges follow: C239-C241 and C272-C275.

It belongs to the HSP33 family. In terms of processing, under oxidizing conditions two disulfide bonds are formed involving the reactive cysteines. Under reducing conditions zinc is bound to the reactive cysteines and the protein is inactive.

The protein resides in the cytoplasm. Functionally, redox regulated molecular chaperone. Protects both thermally unfolding and oxidatively damaged proteins from irreversible aggregation. Plays an important role in the bacterial defense system toward oxidative stress. This Listeria monocytogenes serovar 1/2a (strain ATCC BAA-679 / EGD-e) protein is 33 kDa chaperonin.